The following is a 303-amino-acid chain: Acetylglutamate kinase (303 aa).

Substrate-binding positions include 69–70 (GG), arginine 91, and asparagine 201.

It belongs to the acetylglutamate kinase family. ArgB subfamily.

It is found in the cytoplasm. The enzyme catalyses N-acetyl-L-glutamate + ATP = N-acetyl-L-glutamyl 5-phosphate + ADP. Its pathway is amino-acid biosynthesis; L-arginine biosynthesis; N(2)-acetyl-L-ornithine from L-glutamate: step 2/4. Functionally, catalyzes the ATP-dependent phosphorylation of N-acetyl-L-glutamate. The sequence is that of Acetylglutamate kinase from Novosphingobium aromaticivorans (strain ATCC 700278 / DSM 12444 / CCUG 56034 / CIP 105152 / NBRC 16084 / F199).